The following is a 300-amino-acid chain: Lysenin-related protein 3 (300 aa).

The tract at residues 12–35 (EEIEVDVVAVWKEGYVYENRGDTS) is N-terminal cap domain. A beta-hairpin domain region spans residues 36–109 (VEQKITMTKG…SQVIEHTVTI (74 aa)). The interval 110-158 (PPTSKFTRWKLNADVGGTDIEYMYLIDEVTPISVTQTIPQVIRSRAKIL) is N-terminal cap domain. The segment at 159–299 (VGRQIHLGTT…EDKWILEVVN (141 aa)) is C-terminal receptor-binding domain. Residues K187, S229, Y235, and Y284 each contribute to the an N-(acyl)-sphingosylphosphocholine site. C274 and C285 are joined by a disulfide.

Belongs to the lysenin family. As to quaternary structure, binds to sphingomyelin as a monomer by using its C-terminal domain. Forms a nonamer when sphingomyelin/LRP-3 ratio is lower than ca 500. Oligomerization, but not binding, is influenced by the fluidity of sphingomyelin. Expressed by coelomocytes.

It is found in the secreted. The protein localises to the target cell membrane. Its function is as follows. Pore-forming toxin that specifically binds sphingomyelin in the plasma membrane of various cells. Has antibacterial and hemolytic activity. This Eisenia fetida (Red wiggler worm) protein is Lysenin-related protein 3.